The following is a 285-amino-acid chain: Protease HtpX homolog (285 aa).

The next 2 membrane-spanning stretches (helical) occupy residues 7 to 27 (TAML…MIGG) and 30 to 50 (GMTI…WFSD). Zn(2+) is bound at residue H131. The active site involves E132. H135 contributes to the Zn(2+) binding site. The next 2 helical transmembrane spans lie at 141–161 (ILIS…ANFA) and 177–197 (IAGI…QMAI). Zn(2+) is bound at residue E202.

It belongs to the peptidase M48B family. The cofactor is Zn(2+).

Its subcellular location is the cell inner membrane. This Paraburkholderia phytofirmans (strain DSM 17436 / LMG 22146 / PsJN) (Burkholderia phytofirmans) protein is Protease HtpX homolog.